A 339-amino-acid polypeptide reads, in one-letter code: D-alanine--D-alanine ligase (339 aa).

Residues 115-327 enclose the ATP-grasp domain; the sequence is KHIFRSLGID…FNELVKIIIE (213 aa). An ATP-binding site is contributed by 142-211; the sequence is KIDYPYVLKP…EEYIPGIELH (70 aa). Asp-279, Glu-293, and Asn-295 together coordinate Mg(2+).

The protein belongs to the D-alanine--D-alanine ligase family. Mg(2+) serves as cofactor. The cofactor is Mn(2+).

The protein localises to the cytoplasm. It catalyses the reaction 2 D-alanine + ATP = D-alanyl-D-alanine + ADP + phosphate + H(+). Its pathway is cell wall biogenesis; peptidoglycan biosynthesis. In terms of biological role, cell wall formation. This Wolbachia sp. subsp. Brugia malayi (strain TRS) protein is D-alanine--D-alanine ligase.